The chain runs to 335 residues: MTKVKVAINGYGTIGKRVADAVALQDDMEIIGIAKTRPNFETVMAKDKGFNVYTLADRVGAMEKEGIEVSGTVEEMIKAADVVVDCTPGKVGATNKDLYEKAGIKAIWQGGEAHTLTGCSFNAETNYDEALGKDFVRVVSCNTTGLCRVLSPLDKEFGVKKARVTLLRRAADPGDIKTGPINAIVPNPIKLPSHHGPDVKTVIPNIDIATTAVKLPTTLMHLHTINLELEKECTAEDVESVLAEQSRVRFVGQGITSTAEIMELAKDLGRSRGDMWENCIWNESITMYEGELYFFQAIHQESDVIPENIDAIRAMMELESDASRSIEITNKTMGI.

NAD(+) contacts are provided by residues 13–14 and Gly-111; that span reads TI. Residue 140–142 participates in D-glyceraldehyde 3-phosphate binding; sequence SCN. Residue Cys-141 is the Nucleophile of the active site. Arg-169 contributes to the NAD(+) binding site. D-glyceraldehyde 3-phosphate is bound at residue 195-196; the sequence is HG. An NAD(+)-binding site is contributed by Gln-300.

This sequence belongs to the glyceraldehyde-3-phosphate dehydrogenase family. As to quaternary structure, homotetramer.

The protein localises to the cytoplasm. The enzyme catalyses D-glyceraldehyde 3-phosphate + phosphate + NADP(+) = (2R)-3-phospho-glyceroyl phosphate + NADPH + H(+). The catalysed reaction is D-glyceraldehyde 3-phosphate + phosphate + NAD(+) = (2R)-3-phospho-glyceroyl phosphate + NADH + H(+). It participates in carbohydrate degradation; glycolysis; pyruvate from D-glyceraldehyde 3-phosphate: step 1/5. The chain is Glyceraldehyde-3-phosphate dehydrogenase from Methanococcoides burtonii (strain DSM 6242 / NBRC 107633 / OCM 468 / ACE-M).